The chain runs to 602 residues: Aspartate--tRNA(Asp/Asn) ligase (602 aa).

An L-aspartate-binding site is contributed by glutamate 170. The interval 194-197 (QLFK) is aspartate. Arginine 216 is a binding site for L-aspartate. Residues 216–218 (RDE) and glutamine 225 contribute to the ATP site. Histidine 448 serves as a coordination point for L-aspartate. Glutamate 482 is a binding site for ATP. L-aspartate is bound at residue arginine 489. An ATP-binding site is contributed by 534–537 (GWDR). The disordered stretch occupies residues 559–602 (GGVDPLTDAPAPISAQQRKESGIDAKPEKKSEDKKSEGDTAEAK). Basic and acidic residues predominate over residues 575–602 (QRKESGIDAKPEKKSEDKKSEGDTAEAK).

It belongs to the class-II aminoacyl-tRNA synthetase family. Type 1 subfamily. As to quaternary structure, homodimer.

The protein resides in the cytoplasm. It carries out the reaction tRNA(Asx) + L-aspartate + ATP = L-aspartyl-tRNA(Asx) + AMP + diphosphate. In terms of biological role, aspartyl-tRNA synthetase with relaxed tRNA specificity since it is able to aspartylate not only its cognate tRNA(Asp) but also tRNA(Asn). Reaction proceeds in two steps: L-aspartate is first activated by ATP to form Asp-AMP and then transferred to the acceptor end of tRNA(Asp/Asn). The polypeptide is Aspartate--tRNA(Asp/Asn) ligase (Rhodococcus erythropolis (strain PR4 / NBRC 100887)).